We begin with the raw amino-acid sequence, 327 residues long: Beta-1,4-galactosyltransferase 7 (327 aa).

Topologically, residues 1–30 (MLPSRRKAAQLPWEDGRARLLPGGLRRKCS) are cytoplasmic. A helical; Signal-anchor for type II membrane protein transmembrane segment spans residues 31–51 (IFHLFIAFLLLVFFSLLWLQL). At 52–327 (SCSGDMAQVT…KTATPWCIFG (276 aa)) the chain is on the lumenal side. The tract at residues 61 to 88 (TRGQGQETSGPPRACPPEPPPEHWEEDE) is disordered. Residues 100–104 (PFRER) and 139–141 (FNR) contribute to the UDP-alpha-D-galactose site. A glycan (N-linked (GlcNAc...) asparagine) is linked at Asn154. UDP-alpha-D-galactose is bound by residues 164–165 (VD), Tyr194, and Trp224. Residue Asp165 coordinates Mn(2+). 226-229 (REDD) contributes to the N-acetyl-D-glucosamine binding site. Mn(2+) is bound at residue His257. UDP-alpha-D-galactose is bound by residues 257–259 (HLH) and Arg266.

It belongs to the glycosyltransferase 7 family. It depends on Mn(2+) as a cofactor.

It is found in the golgi apparatus. Its subcellular location is the golgi stack membrane. It catalyses the reaction 3-O-(beta-D-xylosyl)-L-seryl-[protein] + UDP-alpha-D-galactose = 3-O-(beta-D-galactosyl-(1-&gt;4)-beta-D-xylosyl)-L-seryl-[protein] + UDP + H(+). The protein operates within protein modification; protein glycosylation. Functionally, required for the biosynthesis of the tetrasaccharide linkage region of proteoglycans, especially for small proteoglycans in skin fibroblasts. This chain is Beta-1,4-galactosyltransferase 7 (B4galt7), found in Mus musculus (Mouse).